Here is a 380-residue protein sequence, read N- to C-terminus: Cytochrome b (380 aa).

Transmembrane regions (helical) follow at residues 33 to 53, 77 to 98, 113 to 133, and 178 to 198; these read FGSL…FLAM, WLIR…YLHV, WNIG…GYVL, and FFAF…IHLL. His83 and His97 together coordinate heme b. Positions 182 and 196 each coordinate heme b. His201 lines the a ubiquinone pocket. Transmembrane regions (helical) follow at residues 226–246, 288–308, 320–340, and 347–367; these read YKDL…ALFS, LGGV…PMLH, PSQI…WIGG, and FVLI…IALP.

Belongs to the cytochrome b family. In terms of assembly, the cytochrome bc1 complex contains 3 respiratory subunits (MT-CYB, CYC1 and UQCRFS1), 2 core proteins (UQCRC1 and UQCRC2) and probably 6 low-molecular weight proteins. Requires heme b as cofactor.

The protein localises to the mitochondrion inner membrane. Its function is as follows. Component of the ubiquinol-cytochrome c reductase complex (complex III or cytochrome b-c1 complex) that is part of the mitochondrial respiratory chain. The b-c1 complex mediates electron transfer from ubiquinol to cytochrome c. Contributes to the generation of a proton gradient across the mitochondrial membrane that is then used for ATP synthesis. The sequence is that of Cytochrome b (mt-cyb) from Acipenser sinensis (Chinese sturgeon).